A 122-amino-acid polypeptide reads, in one-letter code: Large ribosomal subunit protein uL14 (122 aa).

It belongs to the universal ribosomal protein uL14 family. As to quaternary structure, part of the 50S ribosomal subunit. Forms a cluster with proteins L3 and L19. In the 70S ribosome, L14 and L19 interact and together make contacts with the 16S rRNA in bridges B5 and B8.

Its function is as follows. Binds to 23S rRNA. Forms part of two intersubunit bridges in the 70S ribosome. This chain is Large ribosomal subunit protein uL14, found in Shewanella amazonensis (strain ATCC BAA-1098 / SB2B).